Reading from the N-terminus, the 121-residue chain is Cell division protein FtsB (121 aa).

Residues 1–6 (MRNWRW) lie on the Cytoplasmic side of the membrane. A helical membrane pass occupies residues 7–24 (LLLVLAVLLAWLQYRFWF). Residues 25–121 (GPGNSGEVMM…PASTDPVDHP (97 aa)) lie on the Periplasmic side of the membrane. The stretch at 31–66 (EVMMLEAQVAHQTQDNEGLRQRNQALAAEVKDLKDG) forms a coiled coil. The tract at residues 94 to 121 (APLPAPASPETAAPAQQAPASTDPVDHP) is disordered. Residues 101–121 (SPETAAPAQQAPASTDPVDHP) are compositionally biased toward low complexity.

The protein belongs to the FtsB family. As to quaternary structure, part of a complex composed of FtsB, FtsL and FtsQ.

The protein resides in the cell inner membrane. Essential cell division protein. May link together the upstream cell division proteins, which are predominantly cytoplasmic, with the downstream cell division proteins, which are predominantly periplasmic. This Xanthomonas oryzae pv. oryzae (strain MAFF 311018) protein is Cell division protein FtsB.